The primary structure comprises 66 residues: Large ribosomal subunit protein uL29 (66 aa).

This sequence belongs to the universal ribosomal protein uL29 family.

This chain is Large ribosomal subunit protein uL29, found in Mesorhizobium japonicum (strain LMG 29417 / CECT 9101 / MAFF 303099) (Mesorhizobium loti (strain MAFF 303099)).